The chain runs to 203 residues: Small ribosomal subunit protein uS4c (203 aa).

The region spanning 92-150 (MRLDNIIYRLGMAPTIANARQLVNHGHIVVNDRIVTIPSYRCKPKDIISVRNNSTSRNV) is the S4 RNA-binding domain.

It belongs to the universal ribosomal protein uS4 family. Part of the 30S ribosomal subunit. Contacts protein S5. The interaction surface between S4 and S5 is involved in control of translational fidelity.

It is found in the plastid. The protein resides in the chloroplast. Functionally, one of the primary rRNA binding proteins, it binds directly to 16S rRNA where it nucleates assembly of the body of the 30S subunit. Its function is as follows. With S5 and S12 plays an important role in translational accuracy. The protein is Small ribosomal subunit protein uS4c (rps4) of Chlorokybus atmophyticus (Soil alga).